The primary structure comprises 620 residues: 1-deoxy-D-xylulose-5-phosphate synthase (620 aa).

Thiamine diphosphate contacts are provided by residues histidine 80 and 121–123 (GHS). Aspartate 152 is a binding site for Mg(2+). Residues 153–154 (GA), asparagine 181, tyrosine 288, and glutamate 370 contribute to the thiamine diphosphate site. Asparagine 181 is a Mg(2+) binding site.

This sequence belongs to the transketolase family. DXPS subfamily. Homodimer. Requires Mg(2+) as cofactor. Thiamine diphosphate is required as a cofactor.

It carries out the reaction D-glyceraldehyde 3-phosphate + pyruvate + H(+) = 1-deoxy-D-xylulose 5-phosphate + CO2. The protein operates within metabolic intermediate biosynthesis; 1-deoxy-D-xylulose 5-phosphate biosynthesis; 1-deoxy-D-xylulose 5-phosphate from D-glyceraldehyde 3-phosphate and pyruvate: step 1/1. Catalyzes the acyloin condensation reaction between C atoms 2 and 3 of pyruvate and glyceraldehyde 3-phosphate to yield 1-deoxy-D-xylulose-5-phosphate (DXP). The protein is 1-deoxy-D-xylulose-5-phosphate synthase of Escherichia coli (strain K12 / MC4100 / BW2952).